Here is a 525-residue protein sequence, read N- to C-terminus: GMP synthase [glutamine-hydrolyzing] (525 aa).

A Glutamine amidotransferase type-1 domain is found at 9–207 (RILILDFGSQ…VLDICGCDAL (199 aa)). C86 (nucleophile) is an active-site residue. Active-site residues include H181 and E183. Residues 208-400 (WTSAAIIEDT…LGLPYDMLYR (193 aa)) enclose the GMPS ATP-PPase domain. 235–241 (SGGVDSS) contributes to the ATP binding site.

Homodimer.

It carries out the reaction XMP + L-glutamine + ATP + H2O = GMP + L-glutamate + AMP + diphosphate + 2 H(+). It functions in the pathway purine metabolism; GMP biosynthesis; GMP from XMP (L-Gln route): step 1/1. Its function is as follows. Catalyzes the synthesis of GMP from XMP. The polypeptide is GMP synthase [glutamine-hydrolyzing] (Proteus mirabilis (strain HI4320)).